Reading from the N-terminus, the 475-residue chain is Ribulose bisphosphate carboxylase large chain (475 aa).

Positions 1–2 (MS) are excised as a propeptide. Proline 3 carries the N-acetylproline modification. Lysine 14 carries the N6,N6,N6-trimethyllysine modification. The substrate site is built by asparagine 123 and threonine 173. Lysine 175 functions as the Proton acceptor in the catalytic mechanism. Lysine 177 contributes to the substrate binding site. 3 residues coordinate Mg(2+): lysine 201, aspartate 203, and glutamate 204. Lysine 201 bears the N6-carboxylysine mark. Histidine 294 serves as the catalytic Proton acceptor. Residues arginine 295, histidine 327, and serine 379 each coordinate substrate.

It belongs to the RuBisCO large chain family. Type I subfamily. As to quaternary structure, heterohexadecamer of 8 large chains and 8 small chains; disulfide-linked. The disulfide link is formed within the large subunit homodimers. Mg(2+) is required as a cofactor. Post-translationally, the disulfide bond which can form in the large chain dimeric partners within the hexadecamer appears to be associated with oxidative stress and protein turnover.

The protein localises to the plastid. It localises to the chloroplast. It carries out the reaction 2 (2R)-3-phosphoglycerate + 2 H(+) = D-ribulose 1,5-bisphosphate + CO2 + H2O. The enzyme catalyses D-ribulose 1,5-bisphosphate + O2 = 2-phosphoglycolate + (2R)-3-phosphoglycerate + 2 H(+). Its function is as follows. RuBisCO catalyzes two reactions: the carboxylation of D-ribulose 1,5-bisphosphate, the primary event in carbon dioxide fixation, as well as the oxidative fragmentation of the pentose substrate in the photorespiration process. Both reactions occur simultaneously and in competition at the same active site. In Magnolia macrophylla (Bigleaf magnolia), this protein is Ribulose bisphosphate carboxylase large chain.